A 273-amino-acid chain; its full sequence is 4-hydroxy-tetrahydrodipicolinate reductase (273 aa).

NAD(+) contacts are provided by residues 12–17 and glutamate 38; that span reads GAGGRM. Residue arginine 39 coordinates NADP(+). NAD(+) is bound by residues 102-104 and 126-129; these read GTT and AANF. Histidine 159 serves as the catalytic Proton donor/acceptor. Histidine 160 lines the (S)-2,3,4,5-tetrahydrodipicolinate pocket. Residue lysine 163 is the Proton donor of the active site. 169-170 contributes to the (S)-2,3,4,5-tetrahydrodipicolinate binding site; sequence GT.

It belongs to the DapB family. In terms of assembly, homotetramer.

The protein resides in the cytoplasm. It carries out the reaction (S)-2,3,4,5-tetrahydrodipicolinate + NAD(+) + H2O = (2S,4S)-4-hydroxy-2,3,4,5-tetrahydrodipicolinate + NADH + H(+). The enzyme catalyses (S)-2,3,4,5-tetrahydrodipicolinate + NADP(+) + H2O = (2S,4S)-4-hydroxy-2,3,4,5-tetrahydrodipicolinate + NADPH + H(+). It participates in amino-acid biosynthesis; L-lysine biosynthesis via DAP pathway; (S)-tetrahydrodipicolinate from L-aspartate: step 4/4. Its function is as follows. Catalyzes the conversion of 4-hydroxy-tetrahydrodipicolinate (HTPA) to tetrahydrodipicolinate. The sequence is that of 4-hydroxy-tetrahydrodipicolinate reductase from Yersinia pestis bv. Antiqua (strain Antiqua).